We begin with the raw amino-acid sequence, 395 residues long: S-adenosylmethionine synthase (395 aa).

Histidine 12 lines the ATP pocket. Aspartate 14 contributes to the Mg(2+) binding site. Glutamate 40 contributes to the K(+) binding site. Residues glutamate 53 and glutamine 96 each coordinate L-methionine. The flexible loop stretch occupies residues 96–106; that stretch reads QSKEIADAVNF. ATP-binding positions include 174 to 176, 242 to 243, aspartate 251, 257 to 258, alanine 274, and lysine 278; these read DGK, RF, and RK. Aspartate 251 is an L-methionine binding site. Position 282 (lysine 282) interacts with L-methionine.

Belongs to the AdoMet synthase family. Homotetramer; dimer of dimers. Mg(2+) serves as cofactor. K(+) is required as a cofactor.

The protein resides in the cytoplasm. The catalysed reaction is L-methionine + ATP + H2O = S-adenosyl-L-methionine + phosphate + diphosphate. It participates in amino-acid biosynthesis; S-adenosyl-L-methionine biosynthesis; S-adenosyl-L-methionine from L-methionine: step 1/1. Functionally, catalyzes the formation of S-adenosylmethionine (AdoMet) from methionine and ATP. The overall synthetic reaction is composed of two sequential steps, AdoMet formation and the subsequent tripolyphosphate hydrolysis which occurs prior to release of AdoMet from the enzyme. The sequence is that of S-adenosylmethionine synthase from Tropheryma whipplei (strain Twist) (Whipple's bacillus).